Reading from the N-terminus, the 56-residue chain is U-megalopygitoxin(2)-Mo9 (56 aa).

The first 25 residues, methionine 1–proline 25, serve as a signal peptide directing secretion. Residue glutamine 26 is modified to Pyrrolidone carboxylic acid. Threonine 55 is modified (threonine amide).

Belongs to the caterpillar 2 family. Post-translationally, contains 2 disulfide bonds. Expressed by the venom apparatus.

It is found in the secreted. Functionally, probable toxin. This Megalopyge opercularis (Southern flannel moth) protein is U-megalopygitoxin(2)-Mo9.